We begin with the raw amino-acid sequence, 137 residues long: Immunoglobulin domain-containing protein oig-1 (137 aa).

A signal peptide spans 1 to 23 (MFSELRILRDILLLCFLSVGINA). Residues 41–133 (PKISRSSYFK…KGSRVKKFLT (93 aa)) form the Ig-like C2-type domain. Residues Cys63 and Cys118 are joined by a disulfide bond.

Expressed in DD and VD GABAergic motor neurons. Expressed in a subset of head neurons including M2 motor neurons in the pharynx. Expressed in coelomocytes.

The protein localises to the membrane. The protein resides in the secreted. Its subcellular location is the extracellular space. It is found in the cell projection. It localises to the dendrite. The protein localises to the axon. In terms of biological role, plays a role in neural development, where it temporally regulates synapse formation in the D-type inhibitory GABAergic motor neurons, dorsal D (DD) and ventral D (VD) motor neurons. Controls the translocation of postsynaptic proteins, such as the acetylcholine receptor subunit acr-12, and presynaptic proteins, such as snb-1, along nerve cords to prevent premature synapse remodeling/formation. The sequence is that of Immunoglobulin domain-containing protein oig-1 from Caenorhabditis elegans.